We begin with the raw amino-acid sequence, 131 residues long: Insulin-like 3 (131 aa).

The first 26 residues, 1-26 (MDPHPLTWALVLLGPALALSRAPAPA), serve as a signal peptide directing secretion. 3 disulfides stabilise this stretch: Cys34-Cys116, Cys46-Cys129, and Cys115-Cys120. The propeptide at 58–103 (AVAGGDRELLQWLEGQHLFHGLMASGDPMLVLAPQPPPQASGHHHH) is c peptide like.

This sequence belongs to the insulin family. Heterodimer of a B chain and an A chain linked by two disulfide bonds. In terms of tissue distribution, expressed exclusively in prenatal and postnatal Leydig cells.

It localises to the secreted. Functionally, seems to play a role in testicular function. May be a trophic hormone with a role in testicular descent in fetal life. Is a ligand for LGR8 receptor. The protein is Insulin-like 3 (INSL3) of Sus scrofa (Pig).